Reading from the N-terminus, the 61-residue chain is Small ribosomal subunit protein uS14 (61 aa).

Residues Cys24, Cys27, Cys40, and Cys43 each coordinate Zn(2+).

Belongs to the universal ribosomal protein uS14 family. Zinc-binding uS14 subfamily. In terms of assembly, part of the 30S ribosomal subunit. Contacts proteins S3 and S10. Requires Zn(2+) as cofactor.

Binds 16S rRNA, required for the assembly of 30S particles and may also be responsible for determining the conformation of the 16S rRNA at the A site. In Thermosipho melanesiensis (strain DSM 12029 / CIP 104789 / BI429), this protein is Small ribosomal subunit protein uS14.